The chain runs to 58 residues: Small ribosomal subunit protein eS30 (58 aa).

The segment at Met1–Ala58 is disordered. Basic residues predominate over residues Asp25–Tyr40.

This sequence belongs to the eukaryotic ribosomal protein eS30 family. In terms of assembly, component of the small ribosomal subunit. Mature ribosomes consist of a small (40S) and a large (60S) subunit. The 40S subunit contains about 32 different proteins and 1 molecule of RNA (18S). The 60S subunit contains about 42 different proteins and 3 molecules of RNA (28S, 5.8S and 5S).

It localises to the cytoplasm. In terms of biological role, component of the ribosome, a large ribonucleoprotein complex responsible for the synthesis of proteins in the cell. The small ribosomal subunit (SSU) binds messenger RNAs (mRNAs) and translates the encoded message by selecting cognate aminoacyl-transfer RNA (tRNA) molecules. The large subunit (LSU) contains the ribosomal catalytic site termed the peptidyl transferase center (PTC), which catalyzes the formation of peptide bonds, thereby polymerizing the amino acids delivered by tRNAs into a polypeptide chain. The nascent polypeptides leave the ribosome through a tunnel in the LSU and interact with protein factors that function in enzymatic processing, targeting, and the membrane insertion of nascent chains at the exit of the ribosomal tunnel. The sequence is that of Small ribosomal subunit protein eS30 from Plasmodium falciparum (isolate 3D7).